Consider the following 253-residue polypeptide: MLTGVTRQKILITGASSGLGAGMARSFAAQGRDLALCARRTDRLTELKAELSQRYPDIKIAVAELDVNDHERVPKVFAELSDEIGGIDRVIVNAGIGKGARLGSGKLWANKATIETNLVAALVQIETALDMFNQRGSGHLVLISSVLGVKGVPGVKAAYAASKAGVRSLGESLRAEYAQRPIRVTVLEPGYIESEMTAKSASTMLMVDNATGVKALVAAIEREPGRAAVPWWPWAPLVRLMWVLPPRLTRRFA.

Ser-145 provides a ligand contact to substrate. The active-site Proton acceptor is Tyr-159.

It belongs to the short-chain dehydrogenases/reductases (SDR) family.

This is an uncharacterized protein from Mycobacterium tuberculosis (strain CDC 1551 / Oshkosh).